We begin with the raw amino-acid sequence, 153 residues long: Endoribonuclease YbeY (153 aa).

Zn(2+)-binding residues include H118, H122, and H128.

The protein belongs to the endoribonuclease YbeY family. Zn(2+) serves as cofactor.

It is found in the cytoplasm. Single strand-specific metallo-endoribonuclease involved in late-stage 70S ribosome quality control and in maturation of the 3' terminus of the 16S rRNA. The protein is Endoribonuclease YbeY of Clostridioides difficile (strain 630) (Peptoclostridium difficile).